The sequence spans 391 residues: Coiled-coil domain-containing protein 85C (391 aa).

Coiled coils occupy residues 19–86 and 116–146; these read EELL…RELC and KEVGVYQQKLKELEAKQESLIRDNLELKEII. Disordered stretches follow at residues 155–238 and 278–303; these read GAGS…LNDS and PYHSESQLSPLPQYQEPLQNGSTRVT. A compositionally biased stretch (polar residues) spans 157 to 175; that stretch reads GSRSSIDSQNSLTNLNGSS. A compositionally biased stretch (low complexity) spans 182 to 194; it reads DGSSTSSTGSAGS. Residues 280 to 303 show a composition bias toward polar residues; sequence HSESQLSPLPQYQEPLQNGSTRVT.

The protein belongs to the CCDC85 family.

It localises to the cell junction. The protein localises to the tight junction. The protein resides in the adherens junction. Functionally, may play a role in cell-cell adhesion and epithelium development through its interaction with proteins of the beta-catenin family. May play an important role in cortical development, especially in the maintenance of radial glia. In Xenopus tropicalis (Western clawed frog), this protein is Coiled-coil domain-containing protein 85C (ccdc85c).